A 247-amino-acid polypeptide reads, in one-letter code: Small ribosomal subunit protein uS3 (247 aa).

In terms of domain architecture, KH type-2 spans 39–107; sequence VRDYLRKKLD…PAQVNIEEIT (69 aa). The disordered stretch occupies residues 213–247; it reads SVYNPPKEDKTRAPKRRGRSNSNRRNSDRANTDRG. The span at 237–247 shows a compositional bias: basic and acidic residues; it reads RNSDRANTDRG.

This sequence belongs to the universal ribosomal protein uS3 family. In terms of assembly, part of the 30S ribosomal subunit. Forms a tight complex with proteins S10 and S14.

Its function is as follows. Binds the lower part of the 30S subunit head. Binds mRNA in the 70S ribosome, positioning it for translation. This is Small ribosomal subunit protein uS3 from Psychrobacter sp. (strain PRwf-1).